The following is a 351-amino-acid chain: Photosystem II D2 protein (351 aa).

Residues cysteine 39–threonine 59 form a helical membrane-spanning segment. Residue histidine 116 participates in chlorophyll a binding. The helical transmembrane segment at glycine 123–proline 139 threads the bilayer. Pheophytin a-binding residues include glutamine 128 and asparagine 141. The helical transmembrane segment at valine 151–alanine 164 threads the bilayer. Histidine 196 contributes to the chlorophyll a binding site. The chain crosses the membrane as a helical span at residues glycine 206–glutamate 226. A plastoquinone-binding residues include histidine 213 and phenylalanine 260. Histidine 213 contacts Fe cation. Histidine 267 lines the Fe cation pocket. A helical membrane pass occupies residues glycine 277–arginine 293.

Belongs to the reaction center PufL/M/PsbA/D family. PSII is composed of 1 copy each of membrane proteins PsbA, PsbB, PsbC, PsbD, PsbE, PsbF, PsbH, PsbI, PsbJ, PsbK, PsbL, PsbM, PsbT, PsbY, PsbZ, Psb30/Ycf12, at least 3 peripheral proteins of the oxygen-evolving complex and a large number of cofactors. It forms dimeric complexes. The cofactor is The D1/D2 heterodimer binds P680, chlorophylls that are the primary electron donor of PSII, and subsequent electron acceptors. It shares a non-heme iron and each subunit binds pheophytin, quinone, additional chlorophylls, carotenoids and lipids. There is also a Cl(-1) ion associated with D1 and D2, which is required for oxygen evolution. The PSII complex binds additional chlorophylls, carotenoids and specific lipids..

It localises to the plastid. The protein localises to the chloroplast thylakoid membrane. It catalyses the reaction 2 a plastoquinone + 4 hnu + 2 H2O = 2 a plastoquinol + O2. In terms of biological role, photosystem II (PSII) is a light-driven water:plastoquinone oxidoreductase that uses light energy to abstract electrons from H(2)O, generating O(2) and a proton gradient subsequently used for ATP formation. It consists of a core antenna complex that captures photons, and an electron transfer chain that converts photonic excitation into a charge separation. The D1/D2 (PsbA/PsbD) reaction center heterodimer binds P680, the primary electron donor of PSII as well as several subsequent electron acceptors. D2 is needed for assembly of a stable PSII complex. The chain is Photosystem II D2 protein from Galdieria sulphuraria (Red alga).